The following is a 134-amino-acid chain: Ribulose bisphosphate carboxylase small subunit (134 aa).

Belongs to the RuBisCO small chain family. As to quaternary structure, heterohexadecamer of 8 large and 8 small subunits.

In terms of biological role, ruBisCO catalyzes two reactions: the carboxylation of D-ribulose 1,5-bisphosphate, the primary event in carbon dioxide fixation, as well as the oxidative fragmentation of the pentose substrate. Both reactions occur simultaneously and in competition at the same active site. Although the small subunit is not catalytic it is essential for maximal activity. The polypeptide is Ribulose bisphosphate carboxylase small subunit (Bradyrhizobium diazoefficiens (strain JCM 10833 / BCRC 13528 / IAM 13628 / NBRC 14792 / USDA 110)).